The chain runs to 123 residues: Small ribosomal subunit protein eS25 (123 aa).

Over residues methionine 1–lysine 13 the composition is skewed to basic and acidic residues. A disordered region spans residues methionine 1–glycine 34. A compositionally biased stretch (basic residues) spans lysine 25–glycine 34.

This sequence belongs to the eukaryotic ribosomal protein eS25 family.

This is Small ribosomal subunit protein eS25 (RPS25) from Branchiostoma belcheri (Amphioxus).